Reading from the N-terminus, the 454-residue chain is Enolase (454 aa).

Glutamine 167 is a binding site for (2R)-2-phosphoglycerate. The Proton donor role is filled by glutamate 209. The Mg(2+) site is built by aspartate 250, glutamate 312, and aspartate 339. Lysine 364, arginine 393, serine 394, and lysine 415 together coordinate (2R)-2-phosphoglycerate. Residue lysine 364 is the Proton acceptor of the active site.

The protein belongs to the enolase family. Requires Mg(2+) as cofactor.

It is found in the cytoplasm. The protein resides in the secreted. The protein localises to the cell surface. The catalysed reaction is (2R)-2-phosphoglycerate = phosphoenolpyruvate + H2O. Its pathway is carbohydrate degradation; glycolysis; pyruvate from D-glyceraldehyde 3-phosphate: step 4/5. Catalyzes the reversible conversion of 2-phosphoglycerate (2-PG) into phosphoenolpyruvate (PEP). It is essential for the degradation of carbohydrates via glycolysis. This Mycoplasmopsis agalactiae (strain NCTC 10123 / CIP 59.7 / PG2) (Mycoplasma agalactiae) protein is Enolase.